The following is a 396-amino-acid chain: Phosphopentomutase (396 aa).

D13, D288, H293, D329, H330, and H341 together coordinate Mn(2+).

This sequence belongs to the phosphopentomutase family. Mn(2+) serves as cofactor.

It is found in the cytoplasm. It carries out the reaction 2-deoxy-alpha-D-ribose 1-phosphate = 2-deoxy-D-ribose 5-phosphate. The enzyme catalyses alpha-D-ribose 1-phosphate = D-ribose 5-phosphate. It participates in carbohydrate degradation; 2-deoxy-D-ribose 1-phosphate degradation; D-glyceraldehyde 3-phosphate and acetaldehyde from 2-deoxy-alpha-D-ribose 1-phosphate: step 1/2. In terms of biological role, isomerase that catalyzes the conversion of deoxy-ribose 1-phosphate (dRib-1-P) and ribose 1-phosphate (Rib-1-P) to deoxy-ribose 5-phosphate (dRib-5-P) and ribose 5-phosphate (Rib-5-P), respectively. The chain is Phosphopentomutase from Clostridium perfringens (strain ATCC 13124 / DSM 756 / JCM 1290 / NCIMB 6125 / NCTC 8237 / Type A).